Consider the following 29-residue polypeptide: Conotoxin Bu17 (29 aa).

3 disulfides stabilise this stretch: cysteine 4–cysteine 19, cysteine 5–cysteine 25, and cysteine 15–cysteine 26. A Cysteine amide modification is found at cysteine 26.

Belongs to the conotoxin M superfamily. In terms of tissue distribution, expressed by the venom duct.

The protein resides in the secreted. The chain is Conotoxin Bu17 from Conus bullatus (Bubble cone).